A 532-amino-acid chain; its full sequence is Variant surface glycoprotein ILTAT 1.23 (532 aa).

Positions 1-23 are cleaved as a signal peptide; the sequence is MFKNINAAVLLLILSTRNDYANA. N-linked (GlcNAc...) asparagine glycosylation occurs at Asn66. Disordered regions lie at residues 79 to 107 and 408 to 504; these read APKK…RNHA and MQAG…DQDK. A glycan (N-linked (GlcNAc...) asparagine) is linked at Asn419. The span at 427–445 shows a compositional bias: basic and acidic residues; sequence CKWEEKDGKDGKCVADDSK. Over residues 450 to 470 the composition is skewed to low complexity; that stretch reads GNAPAGAGDGTAGTTTTPNCA. Basic and acidic residues-rich tracts occupy residues 472 to 484 and 494 to 504; these read HTDK…ENKG and KGKEGESDQDK. An N-linked (GlcNAc...) asparagine glycan is attached at Asn509. A lipid anchor (GPI-anchor amidated asparagine) is attached at Asn509. Residues 510–532 constitute a propeptide, removed in mature form; sequence GSFLAKKKFALSVVSAAFTALLF.

Its subcellular location is the cell membrane. Its function is as follows. VSG forms a coat on the surface of the parasite. The trypanosome evades the immune response of the host by expressing a series of antigenically distinct VSGs from an estimated 1000 VSG genes. In Trypanosoma brucei brucei, this protein is Variant surface glycoprotein ILTAT 1.23.